Consider the following 243-residue polypeptide: 3-deoxy-manno-octulosonate cytidylyltransferase (243 aa).

It belongs to the KdsB family.

The protein resides in the cytoplasm. The enzyme catalyses 3-deoxy-alpha-D-manno-oct-2-ulosonate + CTP = CMP-3-deoxy-beta-D-manno-octulosonate + diphosphate. It functions in the pathway nucleotide-sugar biosynthesis; CMP-3-deoxy-D-manno-octulosonate biosynthesis; CMP-3-deoxy-D-manno-octulosonate from 3-deoxy-D-manno-octulosonate and CTP: step 1/1. The protein operates within bacterial outer membrane biogenesis; lipopolysaccharide biosynthesis. Functionally, activates KDO (a required 8-carbon sugar) for incorporation into bacterial lipopolysaccharide in Gram-negative bacteria. This Helicobacter pylori (strain ATCC 700392 / 26695) (Campylobacter pylori) protein is 3-deoxy-manno-octulosonate cytidylyltransferase.